A 236-amino-acid polypeptide reads, in one-letter code: 2,3,4,5-tetrahydropyridine-2,6-dicarboxylate N-acetyltransferase (236 aa).

It belongs to the transferase hexapeptide repeat family. DapH subfamily.

It catalyses the reaction (S)-2,3,4,5-tetrahydrodipicolinate + acetyl-CoA + H2O = L-2-acetamido-6-oxoheptanedioate + CoA. It functions in the pathway amino-acid biosynthesis; L-lysine biosynthesis via DAP pathway; LL-2,6-diaminopimelate from (S)-tetrahydrodipicolinate (acetylase route): step 1/3. Functionally, catalyzes the transfer of an acetyl group from acetyl-CoA to tetrahydrodipicolinate. The chain is 2,3,4,5-tetrahydropyridine-2,6-dicarboxylate N-acetyltransferase from Brevibacillus brevis (strain 47 / JCM 6285 / NBRC 100599).